Reading from the N-terminus, the 81-residue chain is uncharacterized protein (81 aa).

A signal peptide spans 1 to 24; sequence MRKILKIVSLLILLLLLVYSFFSP. The Extracellular portion of the chain corresponds to 25–28; the sequence is NSQL. A helical membrane pass occupies residues 29 to 49; that stretch reads FVFVQLIIIAFLIGFGINCFV. Over 50–81 the chain is Cytoplasmic; that stretch reads KKERYQGTLYFVIAICNITINLDKINELIQSI.

The protein localises to the cell membrane. This is an uncharacterized protein from Bacillus subtilis (strain 168).